A 342-amino-acid chain; its full sequence is Dihydroorotase (342 aa).

2 residues coordinate Zn(2+): His-13 and His-15. Substrate-binding positions include 15–17 (HLR) and Asn-41. Zn(2+) is bound by residues Lys-98, His-135, and His-173. N6-carboxylysine is present on Lys-98. Residue His-135 coordinates substrate. Leu-218 lines the substrate pocket. Residue Asp-246 participates in Zn(2+) binding. Residue Asp-246 is part of the active site. Substrate-binding residues include His-250 and Ala-262.

This sequence belongs to the metallo-dependent hydrolases superfamily. DHOase family. Class II DHOase subfamily. As to quaternary structure, homodimer. Requires Zn(2+) as cofactor.

The enzyme catalyses (S)-dihydroorotate + H2O = N-carbamoyl-L-aspartate + H(+). It participates in pyrimidine metabolism; UMP biosynthesis via de novo pathway; (S)-dihydroorotate from bicarbonate: step 3/3. Functionally, catalyzes the reversible cyclization of carbamoyl aspartate to dihydroorotate. The polypeptide is Dihydroorotase (Vibrio campbellii (strain ATCC BAA-1116)).